We begin with the raw amino-acid sequence, 241 residues long: MMQTGTIHNRDKFLQTVANRLGRHQRTSGVSRPHWRHQPQWTVFQGYSQDELLEALKAQCPRIHTQCVETTAVELKETLKEVVAKHGGGPIVTWDDPRFDEYGLTRLLRNEWPNENVDVHIWDASAGRKNIDYAEQANVGITFSDITLAESGTVVLFSGNGKGRTVSFLPKTYIAIIAKSTIVPRMTQAAAYIHEQIEKGHLIPSCINFITGPSNSADIEMNLVVGVHGPMKATYIVVTDR.

This sequence belongs to the LutC/YkgG family.

Functionally, is involved in L-lactate degradation and allows cells to grow with lactate as the sole carbon source. This chain is Lactate utilization protein C, found in Geobacillus sp. (strain WCH70).